Reading from the N-terminus, the 87-residue chain is UPF0250 protein ECA1299 (87 aa).

This sequence belongs to the UPF0250 family.

This Pectobacterium atrosepticum (strain SCRI 1043 / ATCC BAA-672) (Erwinia carotovora subsp. atroseptica) protein is UPF0250 protein ECA1299.